Here is a 1331-residue protein sequence, read N- to C-terminus: Contactin-associated protein-like 2 (1331 aa).

Residues 1–27 (MQAAPRAGCGAALLLWIVSSCLCRAWT) form the signal peptide. The Extracellular portion of the chain corresponds to 28–1262 (APSTSQKCDE…IRNGVNRNSA (1235 aa)). The 147-residue stretch at 35–181 (CDEPLVSGLP…IGLRIEVYGC (147 aa)) folds into the F5/8 type C domain. The cysteines at positions 35 and 181 are disulfide-linked. Positions 216–368 (FKTSESEGVI…SNVGNLSFSC (153 aa)) constitute a Laminin G-like 1 domain. N-linked (GlcNAc...) asparagine glycosylation is found at Asn-289, Asn-346, Asn-363, Asn-379, Asn-436, Asn-506, Asn-507, and Asn-546. An intrachain disulfide couples Cys-336 to Cys-368. Positions 401–552 (FRTWNPNGLL…SFANVSIDMC (152 aa)) constitute a Laminin G-like 2 domain. Disulfide bonds link Cys-520/Cys-552, Cys-558/Cys-569, Cys-563/Cys-578, and Cys-580/Cys-590. The EGF-like 1 domain maps to 554–591 (IIDRCVPNHCEHGGKCSQTWDSFKCTCDETGYSGATCH). One can recognise a Fibrinogen C-terminal domain in the interval 592–798 (NSIYEPSCEA…LRCQGDRNYW (207 aa)). N-linked (GlcNAc...) asparagine glycosylation is found at Asn-630 and Asn-735. Positions 799 to 963 (NAASFPNPSS…KVTSGFISGC (165 aa)) constitute a Laminin G-like 3 domain. Cystine bridges form between Cys-936-Cys-963, Cys-967-Cys-980, Cys-974-Cys-989, and Cys-991-Cys-1001. Residues 963–1002 (CSGHCTSYGTNCENGGKCLERYHGYSCDCSNTAYDGTFCN) enclose the EGF-like 2 domain. The tract at residues 1026–1045 (ARDSSSRVDNAPDQQNSHPD) is disordered. One can recognise a Laminin G-like 4 domain in the interval 1055–1214 (FSTTKAPCIL…IQGELVESNC (160 aa)). 2 N-linked (GlcNAc...) asparagine glycosylation sites follow: Asn-1116 and Asn-1198. The cysteines at positions 1178 and 1214 are disulfide-linked. Residues 1263–1283 (IIGGVIAVVIFTILCTLVFLI) form a helical membrane-spanning segment. The Cytoplasmic segment spans residues 1284–1331 (RYMFRHKGTYHTNEAKGAESAESADAAIMNNDPNFTETIDESKKEWLI). Phosphoserine occurs at positions 1303 and 1306.

This sequence belongs to the neurexin family. Interacts (via C-terminus) with KCNA2. Interacts with GPR37. As to expression, predominantly expressed in nervous system.

It is found in the membrane. It localises to the cell projection. The protein localises to the axon. Its subcellular location is the cell junction. The protein resides in the paranodal septate junction. Functionally, required for gap junction formation. Required, with CNTNAP1, for radial and longitudinal organization of myelinated axons. Plays a role in the formation of functional distinct domains critical for saltatory conduction of nerve impulses in myelinated nerve fibers. Demarcates the juxtaparanodal region of the axo-glial junction. The polypeptide is Contactin-associated protein-like 2 (CNTNAP2) (Homo sapiens (Human)).